The primary structure comprises 282 residues: NFU1 iron-sulfur cluster scaffold homolog, mitochondrial (282 aa).

Residues 1–27 (MSKLLSYTARIILRNSRITVRQLVRGF) constitute a mitochondrion transit peptide. Residues 178–246 (IKELLDTRIR…IPEVESVEQV (69 aa)) form a nifU region. [4Fe-4S] cluster contacts are provided by Cys215 and Cys218. The segment at 263–282 (KNLKQKEPAGAPVGIGGGPN) is disordered.

It belongs to the NifU family.

The protein resides in the mitochondrion. Its function is as follows. Molecular scaffold for [Fe-S] cluster assembly of mitochondrial iron-sulfur proteins. The polypeptide is NFU1 iron-sulfur cluster scaffold homolog, mitochondrial (Drosophila persimilis (Fruit fly)).